A 331-amino-acid polypeptide reads, in one-letter code: DNA-directed RNA polymerase subunit alpha (331 aa).

The segment at 1-237 is alpha N-terminal domain (alpha-NTD); that stretch reads MQSSVTEFLI…NQLESFVYLR (237 aa). Positions 251-331 are alpha C-terminal domain (alpha-CTD); the sequence is FDPILLRPVD…NWPPDNILDN (81 aa).

It belongs to the RNA polymerase alpha chain family. In terms of assembly, homodimer. The RNAP catalytic core consists of 2 alpha, 1 beta, 1 beta' and 1 omega subunit. When a sigma factor is associated with the core the holoenzyme is formed, which can initiate transcription.

The enzyme catalyses RNA(n) + a ribonucleoside 5'-triphosphate = RNA(n+1) + diphosphate. DNA-dependent RNA polymerase catalyzes the transcription of DNA into RNA using the four ribonucleoside triphosphates as substrates. The chain is DNA-directed RNA polymerase subunit alpha from Buchnera aphidicola subsp. Baizongia pistaciae (strain Bp).